A 274-amino-acid polypeptide reads, in one-letter code: 5-deoxy-glucuronate isomerase (274 aa).

This sequence belongs to the isomerase IolB family.

The enzyme catalyses 5-deoxy-D-glucuronate = 5-dehydro-2-deoxy-D-gluconate. The protein operates within polyol metabolism; myo-inositol degradation into acetyl-CoA; acetyl-CoA from myo-inositol: step 4/7. Involved in the isomerization of 5-deoxy-glucuronate (5DG) to 5-dehydro-2-deoxy-D-gluconate (DKG or 2-deoxy-5-keto-D-gluconate). This Geobacillus thermodenitrificans (strain NG80-2) protein is 5-deoxy-glucuronate isomerase.